The sequence spans 243 residues: Protein IN2-1 homolog A (243 aa).

The region spanning 31-112 (GTTRLYICYF…YIDSHFEGPA (82 aa)) is the GST N-terminal domain. Glutathione-binding positions include lysine 70, valine 84, and 96–97 (ES). The 124-residue stretch at 117–240 (DPEKRQFADE…YLLDLAKTHL (124 aa)) folds into the GST C-terminal domain.

It belongs to the GST superfamily. HSP26 family.

The sequence is that of Protein IN2-1 homolog A from Oryza sativa subsp. japonica (Rice).